A 199-amino-acid chain; its full sequence is Chaperone protein TorD (199 aa).

Belongs to the TorD/DmsD family. TorD subfamily.

The protein localises to the cytoplasm. Its function is as follows. Involved in the biogenesis of TorA. Acts on TorA before the insertion of the molybdenum cofactor and, as a result, probably favors a conformation of the apoenzyme that is competent for acquiring the cofactor. The polypeptide is Chaperone protein TorD (Escherichia coli O8 (strain IAI1)).